The following is a 209-amino-acid chain: Peptide methionine sulfoxide reductase MsrA (209 aa).

Residue Cys14 is part of the active site. Positions 183 to 209 are disordered; that stretch reads FSALTTGGNQPGARGGLTNNTCQHPRH. Residues 199-209 are compositionally biased toward polar residues; that stretch reads LTNNTCQHPRH.

This sequence belongs to the MsrA Met sulfoxide reductase family.

It carries out the reaction L-methionyl-[protein] + [thioredoxin]-disulfide + H2O = L-methionyl-(S)-S-oxide-[protein] + [thioredoxin]-dithiol. The enzyme catalyses [thioredoxin]-disulfide + L-methionine + H2O = L-methionine (S)-S-oxide + [thioredoxin]-dithiol. Functionally, has an important function as a repair enzyme for proteins that have been inactivated by oxidation. Catalyzes the reversible oxidation-reduction of methionine sulfoxide in proteins to methionine. The sequence is that of Peptide methionine sulfoxide reductase MsrA from Pseudomonas fluorescens.